Reading from the N-terminus, the 256-residue chain is uncharacterized protein (256 aa).

Positions 1–24 (MIKRVNKLVLGISLLFLVISIAAG) are cleaved as a signal peptide. Residue Cys25 is the site of N-palmitoyl cysteine attachment. Cys25 is lipidated: S-diacylglycerol cysteine.

The protein belongs to the staphylococcal tandem lipoprotein family.

The protein resides in the cell membrane. This is an uncharacterized protein from Staphylococcus aureus.